Reading from the N-terminus, the 54-residue chain is Large ribosomal subunit protein bL33 (54 aa).

This sequence belongs to the bacterial ribosomal protein bL33 family.

The protein is Large ribosomal subunit protein bL33 of Legionella pneumophila (strain Lens).